The sequence spans 256 residues: Homeobox-leucine zipper protein HOX18 (256 aa).

A disordered region spans residues 52 to 116 (YDHGRDEEQA…GGGGGGTRKK (65 aa)). Residues 102–112 (DGGSGGGGGGG) are compositionally biased toward gly residues. The segment at residues 112–171 (GTRKKLQLTKEQSTLLEDSFRVHNILSHAQKHELARQLKLKPRQVEVWFQNRRARTKLKQ) is a DNA-binding region (homeobox). A leucine-zipper region spans residues 170–214 (KQTEVDCEFLKRCCESLTEENKQLKHELMELRRLASPAAAAAGSQ).

It belongs to the HD-ZIP homeobox family. Class II subfamily. Expressed in roots, leaf sheaths and blades and panicles.

It localises to the nucleus. Functionally, probable transcription factor. The sequence is that of Homeobox-leucine zipper protein HOX18 (HOX18) from Oryza sativa subsp. japonica (Rice).